Consider the following 481-residue polypeptide: uncharacterized protein (481 aa).

The next 10 helical transmembrane spans lie at 30-50 (TIII…FVQF), 96-116 (AIAL…FIGM), 154-174 (CMAV…FNSV), 196-216 (ISLV…IAII), 220-240 (LVPM…GMHI), 250-270 (IVQS…ALVS), 311-331 (MLGV…IILL), 354-374 (IGEF…YSSI), 391-411 (KPWL…FGAV), and 424-444 (VMAV…PIVW).

Belongs to the alanine or glycine:cation symporter (AGCS) (TC 2.A.25) family.

Its subcellular location is the cell inner membrane. This is an uncharacterized protein from Haemophilus influenzae (strain ATCC 51907 / DSM 11121 / KW20 / Rd).